Reading from the N-terminus, the 265-residue chain is uncharacterized protein (265 aa).

Residues 3–23 (KKTWVYIIIAIIIILLLVWYF) traverse the membrane as a helical; Signal-anchor for type II membrane protein segment. N-linked (GlcNAc...) asparagine; by host glycans are attached at residues Asn-37 and Asn-125. Residues 37-94 (NQTYNMLQQQISSLNQQILFLKQQISNLHVPAPTSTVNSLRQTVSDINQQVSTINNQI) adopt a coiled-coil conformation. Positions 158–257 (NVADNELNVL…KNSLGSAVRN (100 aa)) form a coiled coil.

It localises to the host membrane. The protein localises to the virion. This is an uncharacterized protein from Acanthamoeba polyphaga (Amoeba).